Reading from the N-terminus, the 203-residue chain is Outer-membrane lipoprotein carrier protein (203 aa).

Positions M1–A19 are cleaved as a signal peptide.

The protein belongs to the LolA family. As to quaternary structure, monomer.

The protein resides in the periplasm. Functionally, participates in the translocation of lipoproteins from the inner membrane to the outer membrane. Only forms a complex with a lipoprotein if the residue after the N-terminal Cys is not an aspartate (The Asp acts as a targeting signal to indicate that the lipoprotein should stay in the inner membrane). The protein is Outer-membrane lipoprotein carrier protein of Shewanella amazonensis (strain ATCC BAA-1098 / SB2B).